The chain runs to 643 residues: Melanoma-associated antigen C3 (643 aa).

MAGE domains follow at residues 184-384 (LDEK…AAGM) and 456-643 (LDEK…FCPE). The interval 347 to 421 (NPQGLAGHRQ…PQSPLDSCSS (75 aa)) is disordered. A compositionally biased stretch (basic and acidic residues) spans 354–363 (HRQEDGRRGL). Positions 383 to 414 (GMPPLPQSPPEIPPQGPPKISPQGPPQSPPQS) are enriched in pro residues. Phosphothreonine is present on residues threonine 478, threonine 484, and threonine 485.

Expressed in testis. Not expressed in other normal tissues, but is expressed in tumors of different histological origins.

The protein is Melanoma-associated antigen C3 (MAGEC3) of Homo sapiens (Human).